The sequence spans 456 residues: Bifunctional protein GlmU (456 aa).

The pyrophosphorylase stretch occupies residues Met1 to Lys228. UDP-N-acetyl-alpha-D-glucosamine-binding positions include Leu11 to Gly14, Lys25, Gln75, Gly80 to Thr81, Tyr102 to Asp104, Gly138, Glu153, Asn168, and Asn226. Asp104 contributes to the Mg(2+) binding site. Asn226 lines the Mg(2+) pocket. The segment at Leu229–Ala249 is linker. The segment at Gly250–Gln456 is N-acetyltransferase. UDP-N-acetyl-alpha-D-glucosamine contacts are provided by Arg332 and Lys350. His362 functions as the Proton acceptor in the catalytic mechanism. Positions 365 and 376 each coordinate UDP-N-acetyl-alpha-D-glucosamine. Residues Ala379, Asn385–Tyr386, Ser404, Ala422, and Arg439 each bind acetyl-CoA.

It in the N-terminal section; belongs to the N-acetylglucosamine-1-phosphate uridyltransferase family. This sequence in the C-terminal section; belongs to the transferase hexapeptide repeat family. As to quaternary structure, homotrimer. The cofactor is Mg(2+).

The protein resides in the cytoplasm. It carries out the reaction alpha-D-glucosamine 1-phosphate + acetyl-CoA = N-acetyl-alpha-D-glucosamine 1-phosphate + CoA + H(+). It catalyses the reaction N-acetyl-alpha-D-glucosamine 1-phosphate + UTP + H(+) = UDP-N-acetyl-alpha-D-glucosamine + diphosphate. Its pathway is nucleotide-sugar biosynthesis; UDP-N-acetyl-alpha-D-glucosamine biosynthesis; N-acetyl-alpha-D-glucosamine 1-phosphate from alpha-D-glucosamine 6-phosphate (route II): step 2/2. The protein operates within nucleotide-sugar biosynthesis; UDP-N-acetyl-alpha-D-glucosamine biosynthesis; UDP-N-acetyl-alpha-D-glucosamine from N-acetyl-alpha-D-glucosamine 1-phosphate: step 1/1. It participates in bacterial outer membrane biogenesis; LPS lipid A biosynthesis. Its function is as follows. Catalyzes the last two sequential reactions in the de novo biosynthetic pathway for UDP-N-acetylglucosamine (UDP-GlcNAc). The C-terminal domain catalyzes the transfer of acetyl group from acetyl coenzyme A to glucosamine-1-phosphate (GlcN-1-P) to produce N-acetylglucosamine-1-phosphate (GlcNAc-1-P), which is converted into UDP-GlcNAc by the transfer of uridine 5-monophosphate (from uridine 5-triphosphate), a reaction catalyzed by the N-terminal domain. This chain is Bifunctional protein GlmU, found in Neisseria meningitidis serogroup A / serotype 4A (strain DSM 15465 / Z2491).